The sequence spans 407 residues: Elongation factor Tu (407 aa).

The tr-type G domain maps to 10 to 217 (KPHVNVGTIG…TLDEYIPEPE (208 aa)). The segment at 19 to 26 (GHVDHGKT) is G1. 19 to 26 (GHVDHGKT) provides a ligand contact to GTP. Thr26 lines the Mg(2+) pocket. A G2 region spans residues 60–64 (GITIA). The segment at 81-84 (DCPG) is G3. Residues 81–85 (DCPGH) and 136–139 (NKAD) each bind GTP. Positions 136–139 (NKAD) are G4. The segment at 184 to 186 (SAL) is G5.

This sequence belongs to the TRAFAC class translation factor GTPase superfamily. Classic translation factor GTPase family. EF-Tu/EF-1A subfamily. As to quaternary structure, monomer.

The protein localises to the cytoplasm. It catalyses the reaction GTP + H2O = GDP + phosphate + H(+). GTP hydrolase that promotes the GTP-dependent binding of aminoacyl-tRNA to the A-site of ribosomes during protein biosynthesis. The chain is Elongation factor Tu from Teredinibacter turnerae (strain ATCC 39867 / T7901).